The chain runs to 251 residues: Phosphate import ATP-binding protein PstB (251 aa).

In terms of domain architecture, ABC transporter spans phenylalanine 5 to leucine 246. Glycine 37–serine 44 provides a ligand contact to ATP.

Belongs to the ABC transporter superfamily. Phosphate importer (TC 3.A.1.7) family. In terms of assembly, the complex is composed of two ATP-binding proteins (PstB), two transmembrane proteins (PstC and PstA) and a solute-binding protein (PstS).

The protein resides in the cell membrane. The catalysed reaction is phosphate(out) + ATP + H2O = ADP + 2 phosphate(in) + H(+). Part of the ABC transporter complex PstSACB involved in phosphate import. Responsible for energy coupling to the transport system. The sequence is that of Phosphate import ATP-binding protein PstB from Archaeoglobus fulgidus (strain ATCC 49558 / DSM 4304 / JCM 9628 / NBRC 100126 / VC-16).